The chain runs to 134 residues: ATP synthase epsilon chain, chloroplastic (134 aa).

Belongs to the ATPase epsilon chain family. In terms of assembly, F-type ATPases have 2 components, CF(1) - the catalytic core - and CF(0) - the membrane proton channel. CF(1) has five subunits: alpha(3), beta(3), gamma(1), delta(1), epsilon(1). CF(0) has three main subunits: a, b and c.

Its subcellular location is the plastid. The protein resides in the chloroplast thylakoid membrane. In terms of biological role, produces ATP from ADP in the presence of a proton gradient across the membrane. The polypeptide is ATP synthase epsilon chain, chloroplastic (Liriodendron tulipifera (Tuliptree)).